Consider the following 329-residue polypeptide: Biotin synthase (329 aa).

The Radical SAM core domain maps to 46-275 (FFGRRLKLVR…LNPKAELRAS (230 aa)). [4Fe-4S] cluster is bound by residues Cys-64, Cys-68, and Cys-71. Cys-108, Cys-140, Cys-200, and Arg-273 together coordinate [2Fe-2S] cluster.

Belongs to the radical SAM superfamily. Biotin synthase family. Homodimer. Requires [4Fe-4S] cluster as cofactor. [2Fe-2S] cluster is required as a cofactor.

The catalysed reaction is (4R,5S)-dethiobiotin + (sulfur carrier)-SH + 2 reduced [2Fe-2S]-[ferredoxin] + 2 S-adenosyl-L-methionine = (sulfur carrier)-H + biotin + 2 5'-deoxyadenosine + 2 L-methionine + 2 oxidized [2Fe-2S]-[ferredoxin]. Its pathway is cofactor biosynthesis; biotin biosynthesis; biotin from 7,8-diaminononanoate: step 2/2. In terms of biological role, catalyzes the conversion of dethiobiotin (DTB) to biotin by the insertion of a sulfur atom into dethiobiotin via a radical-based mechanism. In Thermus thermophilus (strain ATCC BAA-163 / DSM 7039 / HB27), this protein is Biotin synthase.